The chain runs to 294 residues: Putative glucose-6-phosphate 1-epimerase (294 aa).

Residues Arg-74 and Arg-99 each contribute to the substrate site. His-164 is a catalytic residue. Substrate is bound at residue Asp-208. Glu-267 is an active-site residue.

Belongs to the glucose-6-phosphate 1-epimerase family. Monomer in solution.

It carries out the reaction alpha-D-glucose 6-phosphate = beta-D-glucose 6-phosphate. This Escherichia coli (strain K12) protein is Putative glucose-6-phosphate 1-epimerase (yeaD).